Reading from the N-terminus, the 599-residue chain is Elongation factor 4 (599 aa).

A tr-type G domain is found at D5–K187. GTP is bound by residues D17–T22 and N134–D137.

Belongs to the TRAFAC class translation factor GTPase superfamily. Classic translation factor GTPase family. LepA subfamily.

Its subcellular location is the cell inner membrane. The catalysed reaction is GTP + H2O = GDP + phosphate + H(+). In terms of biological role, required for accurate and efficient protein synthesis under certain stress conditions. May act as a fidelity factor of the translation reaction, by catalyzing a one-codon backward translocation of tRNAs on improperly translocated ribosomes. Back-translocation proceeds from a post-translocation (POST) complex to a pre-translocation (PRE) complex, thus giving elongation factor G a second chance to translocate the tRNAs correctly. Binds to ribosomes in a GTP-dependent manner. The polypeptide is Elongation factor 4 (Cereibacter sphaeroides (strain ATCC 17025 / ATH 2.4.3) (Rhodobacter sphaeroides)).